The following is a 225-amino-acid chain: ATP-dependent Clp protease proteolytic subunit (225 aa).

Serine 123 (nucleophile) is an active-site residue. The active site involves histidine 148.

This sequence belongs to the peptidase S14 family. In terms of assembly, fourteen ClpP subunits assemble into 2 heptameric rings which stack back to back to give a disk-like structure with a central cavity, resembling the structure of eukaryotic proteasomes.

The protein resides in the cytoplasm. The catalysed reaction is Hydrolysis of proteins to small peptides in the presence of ATP and magnesium. alpha-casein is the usual test substrate. In the absence of ATP, only oligopeptides shorter than five residues are hydrolyzed (such as succinyl-Leu-Tyr-|-NHMec, and Leu-Tyr-Leu-|-Tyr-Trp, in which cleavage of the -Tyr-|-Leu- and -Tyr-|-Trp bonds also occurs).. Functionally, cleaves peptides in various proteins in a process that requires ATP hydrolysis. Has a chymotrypsin-like activity. Plays a major role in the degradation of misfolded proteins. The sequence is that of ATP-dependent Clp protease proteolytic subunit from Chlorobium luteolum (strain DSM 273 / BCRC 81028 / 2530) (Pelodictyon luteolum).